We begin with the raw amino-acid sequence, 477 residues long: ATP synthase subunit beta (477 aa).

Position 163–170 (163–170 (GGAGVGKT)) interacts with ATP.

The protein belongs to the ATPase alpha/beta chains family. In terms of assembly, F-type ATPases have 2 components, CF(1) - the catalytic core - and CF(0) - the membrane proton channel. CF(1) has five subunits: alpha(3), beta(3), gamma(1), delta(1), epsilon(1). CF(0) has four main subunits: a(1), b(1), b'(1) and c(9-12).

It is found in the cellular thylakoid membrane. The enzyme catalyses ATP + H2O + 4 H(+)(in) = ADP + phosphate + 5 H(+)(out). Functionally, produces ATP from ADP in the presence of a proton gradient across the membrane. The catalytic sites are hosted primarily by the beta subunits. The sequence is that of ATP synthase subunit beta from Synechococcus sp. (strain JA-2-3B'a(2-13)) (Cyanobacteria bacterium Yellowstone B-Prime).